We begin with the raw amino-acid sequence, 389 residues long: Major outer membrane porin (389 aa).

Residues M1–A22 form the signal peptide.

It belongs to the chlamydial porin (CP) (TC 1.B.2) family. As to quaternary structure, part of a disulfide cross-linked outer membrane complex (COMC) composed of the major outer membrane porin (MOMP), the small cysteine-rich protein (OmcA) and the large cysteine-rich periplasmic protein (OmcB).

It localises to the cell outer membrane. Functionally, in elementary bodies (EBs, the infectious stage, which is able to survive outside the host cell) provides the structural integrity of the outer envelope through disulfide cross-links with the small cysteine-rich protein and the large cysteine-rich periplasmic protein. It has been described in publications as the Sarkosyl-insoluble COMC (Chlamydia outer membrane complex), and serves as the functional equivalent of peptidoglycan. In terms of biological role, permits diffusion of specific solutes through the outer membrane. This Chlamydia abortus (strain DSM 27085 / S26/3) (Chlamydophila abortus) protein is Major outer membrane porin (ompA).